The following is a 412-amino-acid chain: Putative F-box protein At3g22940 (412 aa).

In terms of domain architecture, F-box spans 1-38 (MPLEEILSRLPLKSTRAVRSTCKKWDSLFKNRSFISKA).

The protein is Putative F-box protein At3g22940 of Arabidopsis thaliana (Mouse-ear cress).